A 230-amino-acid chain; its full sequence is Orotidine 5'-phosphate decarboxylase (230 aa).

Substrate contacts are provided by residues Asp11, Lys34, 61–70, Thr117, Arg179, Gln188, Gly208, and Arg209; that span reads DLKLHDIPNT. Lys63 serves as the catalytic Proton donor.

The protein belongs to the OMP decarboxylase family. Type 1 subfamily. As to quaternary structure, homodimer.

It carries out the reaction orotidine 5'-phosphate + H(+) = UMP + CO2. Its pathway is pyrimidine metabolism; UMP biosynthesis via de novo pathway; UMP from orotate: step 2/2. Functionally, catalyzes the decarboxylation of orotidine 5'-monophosphate (OMP) to uridine 5'-monophosphate (UMP). The chain is Orotidine 5'-phosphate decarboxylase from Streptococcus mutans serotype c (strain ATCC 700610 / UA159).